The primary structure comprises 1465 residues: DNA polymerase III PolC-type (1465 aa).

In terms of domain architecture, Exonuclease spans 425–581; the sequence is YVVFDVETTG…YDAEATGRLL (157 aa).

This sequence belongs to the DNA polymerase type-C family. PolC subfamily.

It is found in the cytoplasm. It carries out the reaction DNA(n) + a 2'-deoxyribonucleoside 5'-triphosphate = DNA(n+1) + diphosphate. Functionally, required for replicative DNA synthesis. This DNA polymerase also exhibits 3' to 5' exonuclease activity. The protein is DNA polymerase III PolC-type of Streptococcus mutans serotype c (strain ATCC 700610 / UA159).